The sequence spans 219 residues: Putative zinc metalloprotease YwhC (219 aa).

Residues 4–24 (FLYYPLSLMPYLVITLIVSFT) traverse the membrane as a helical segment. His26 serves as a coordination point for Zn(2+). Residue Glu27 is part of the active site. His30 serves as a coordination point for Zn(2+). 4 helical membrane passes run 52–72 (PIKH…FGWA), 94–114 (IAGP…LVLM), 132–152 (FFSI…LPLP), and 180–200 (FIVF…WPML).

Belongs to the peptidase M50B family. Requires Zn(2+) as cofactor.

It is found in the cell membrane. This Bacillus subtilis (strain 168) protein is Putative zinc metalloprotease YwhC (ywhC).